The primary structure comprises 796 residues: Probable phosphoketolase (796 aa).

This sequence belongs to the XFP family. It depends on thiamine diphosphate as a cofactor.

The sequence is that of Probable phosphoketolase from Clostridium acetobutylicum (strain ATCC 824 / DSM 792 / JCM 1419 / IAM 19013 / LMG 5710 / NBRC 13948 / NRRL B-527 / VKM B-1787 / 2291 / W).